The primary structure comprises 584 residues: MIIEGKIIKIAGPVIIADGMRGAQMYEMVRVGEQKLIGEIIELEGDTATIQVYEETAGIQPGEVVESTGGPLSVELGPGVMGSIFDGIQRPLELIREESGDFIARGVDAESISKEKKWTFKPVAKVGDKVKGGDVLGEVQETSAVLQKILVPPMIEGELTSIASEGEYTVLEDIAEVATDKGDEKIQMLQKWPVRKGRPYVDKLDPDVPLVTGQRAQDTFFSVAKGGAAAIPGPFGSGKTVTQQQLAKWADADIVIYIGCGERGNEMTEVLTEFPYLDDPKTGNPLMDRTVLIANTSNMPVAAREACVYTGITIAEYYRDQGYDVALMADSTSRWAEAMREISGRLEEMPGEEGYPAYLASRLAQFYERAGRVNTIGTTSDVASITVVGAVSPPGGDLSEPVTQNTLRICKVFWALDASLADKRHFPSIDWLQSYSLYVDSIEGWWAENVAADWRETRDQAMILLQKESELQEIVQLVGPDALPEADQATLETTRMLREDFLQQNAFDDIDTYCPPVKQYNMLKTILLFHKEALAAVGRGVPIQNIVALPVKEEIGKMKYIPQDEFAAKCEEIQAAITKQCSEA.

233–240 contacts ATP; it reads GPFGSGKT.

This sequence belongs to the ATPase alpha/beta chains family. As to quaternary structure, has multiple subunits with at least A(3), B(3), C, D, E, F, H, I and proteolipid K(x).

The protein localises to the cell membrane. It carries out the reaction ATP + H2O + 4 H(+)(in) = ADP + phosphate + 5 H(+)(out). Its function is as follows. Component of the A-type ATP synthase that produces ATP from ADP in the presence of a proton gradient across the membrane. The A chain is the catalytic subunit. This Methanobrevibacter smithii (strain ATCC 35061 / DSM 861 / OCM 144 / PS) protein is A-type ATP synthase subunit A.